Here is a 779-residue protein sequence, read N- to C-terminus: Probable glutamine--tRNA ligase (779 aa).

ATP is bound by residues 268–270 and 274–280; these read EPN and HIGHAKA. Asp-300 and Tyr-440 together coordinate L-glutamine. Residues Thr-459, 488–489, and 496–498 each bind ATP; these read RL and LSK.

Belongs to the class-I aminoacyl-tRNA synthetase family.

It catalyses the reaction tRNA(Gln) + L-glutamine + ATP = L-glutaminyl-tRNA(Gln) + AMP + diphosphate. The chain is Probable glutamine--tRNA ligase (glnS) from Dictyostelium discoideum (Social amoeba).